Reading from the N-terminus, the 644-residue chain is Protein ecdysoneless homolog (644 aa).

Disordered regions lie at residues A430–D449, L496–G537, Q567–S589, and Q623–N644. Over residues V431 to N447 the composition is skewed to basic and acidic residues. The transcription activation stretch occupies residues V439–N644. Residues I481–G497 form an involved in nuclear export region. Positions E502–E532 are acidic region required for transactivation activity. Phosphoserine occurs at positions 503, 505, and 518. Positions S503–D523 are enriched in acidic residues. Over residues F524–S534 the composition is skewed to basic and acidic residues. Positions Q567–N577 are enriched in polar residues.

The protein belongs to the ECD family. Interacts with TP53, MDM2, TXNIP. Interacts (phosphorylated) with PIH1D1. Interacts with RUVBL1 mediating the PIH1D1-independent association with the R2TP complex. Interacts with RB1, RBL1 and RBL2; ECD competes with E2F1 for binding to hypophospshorylated RB1. Interacts with EP300. Interacts with DDX39A. Post-translationally, phosphorylated predominantly by CK2 on two serine-containing clusters; involved in cell cycle regulation activity. In terms of tissue distribution, highly expressed in muscle and heart. Over-expressed in pancreatic and breast cancers.

The protein localises to the cytoplasm. Its subcellular location is the nucleus. In terms of biological role, regulator of p53/TP53 stability and function. Inhibits MDM2-mediated degradation of p53/TP53 possibly by cooperating in part with TXNIP. May be involved transcriptional regulation. In vitro has intrinsic transactivation activity enhanced by EP300. May be a transcriptional activator required for the expression of glycolytic genes. Involved in regulation of cell cycle progression. Proposed to disrupt Rb-E2F binding leading to transcriptional activation of E2F proteins. The cell cycle -regulating function may depend on its RUVBL1-mediated association with the R2TP complex. May play a role in regulation of pre-mRNA splicing. Participates together with DDX39A in mRNA nuclear export. This chain is Protein ecdysoneless homolog (ECD), found in Homo sapiens (Human).